A 289-amino-acid polypeptide reads, in one-letter code: Iodotyrosine deiodinase 1 (289 aa).

The chain crosses the membrane as a helical span at residues 1-21; that stretch reads MYFLTPILVAILCILVVWIFK. Basic and acidic residues predominate over residues 29–58; the sequence is KKKGEPRTRAEARPWVDEDLKDSSDLHQAE. A disordered region spans residues 29-69; the sequence is KKKGEPRTRAEARPWVDEDLKDSSDLHQAEEDADEWQESEE. Residues 59 to 69 are compositionally biased toward acidic residues; that stretch reads EDADEWQESEE. Residues 100–104, S128, and 128–129 each bind FMN; these read RRSVR and SG. Positions 130, 157, 161, and 182 each coordinate 3-iodo-L-tyrosine. FMN is bound by residues 237–239 and R279; that span reads TTT.

It belongs to the nitroreductase family. As to quaternary structure, homodimer. The cofactor is FMN. In terms of tissue distribution, expressed at a high level in thyroid gland (at protein level). Expressed at a high level in thyroid gland and at lower level in kidney and trachea.

The protein localises to the cell membrane. It localises to the cytoplasmic vesicle membrane. It carries out the reaction 2 iodide + L-tyrosine + 2 NADP(+) = 3,5-diiodo-L-tyrosine + 2 NADPH + H(+). It catalyses the reaction iodide + L-tyrosine + NADP(+) = 3-iodo-L-tyrosine + NADPH. The enzyme catalyses 3-iodo-L-tyrosine + iodide + NADP(+) = 3,5-diiodo-L-tyrosine + NADPH + H(+). The catalysed reaction is L-tyrosine + chloride + NADP(+) = 3-chloro-L-tyrosine + NADPH. It carries out the reaction bromide + L-tyrosine + NADP(+) = 3-bromo-L-tyrosine + NADPH. Catalyzes the dehalogenation of halotyrosines such as 3-bromo-L-tyrosine, 3-chloro-L-tyrosine, 3-iodo-L-tyrosine and 3,5-diiodo-L-tyrosine. During thyroid hormone biosynthesis, facilitates iodide salvage by catalysing the oxidative NADPH-dependent deiodination of the halogenated by-products of thyroid hormone production, monoiodotyrosine (L-MIT) and diiodotyrosine (L-DIT). The scavanged iodide can then reenter the hormone-producing pathways. Acts more efficiently on 3-iodo-L-tyrosine than 3,5-diiodo-L-tyrosine. This Homo sapiens (Human) protein is Iodotyrosine deiodinase 1.